The following is a 602-amino-acid chain: ATP-dependent lipid A-core flippase 1 (602 aa).

5 consecutive transmembrane segments (helical) span residues 36–56 (LGFV…VYFL), 80–100 (LFII…NYCL), 154–174 (ILTI…MFYY), 176–196 (WQLS…VSVV), and 261–281 (ASVP…FYAI). One can recognise an ABC transmembrane type-1 domain in the interval 39–321 (VAAIIGMLGY…LTNVNSEFQQ (283 aa)). Residues 362 to 599 (YKNTNTMTTS…QGAYAQLHSF (238 aa)) form the ABC transporter domain. 398 to 405 (GRSGSGKS) contacts ATP.

This sequence belongs to the ABC transporter superfamily. Lipid exporter (TC 3.A.1.106) family. As to quaternary structure, homodimer.

It localises to the cell inner membrane. The catalysed reaction is ATP + H2O + lipid A-core oligosaccharideSide 1 = ADP + phosphate + lipid A-core oligosaccharideSide 2.. In terms of biological role, involved in lipopolysaccharide (LPS) biosynthesis. Translocates lipid A-core from the inner to the outer leaflet of the inner membrane. Transmembrane domains (TMD) form a pore in the inner membrane and the ATP-binding domain (NBD) is responsible for energy generation. In Colwellia psychrerythraea (strain 34H / ATCC BAA-681) (Vibrio psychroerythus), this protein is ATP-dependent lipid A-core flippase 1.